Here is a 246-residue protein sequence, read N- to C-terminus: Large ribosomal subunit protein uL3 (246 aa).

Residues 140–162 form a disordered region; the sequence is SHRSIGSTGGRQDPGKTFKNKKM. Q151 is subject to N5-methylglutamine.

This sequence belongs to the universal ribosomal protein uL3 family. Part of the 50S ribosomal subunit. Forms a cluster with proteins L14 and L19. In terms of processing, methylated by PrmB.

One of the primary rRNA binding proteins, it binds directly near the 3'-end of the 23S rRNA, where it nucleates assembly of the 50S subunit. The sequence is that of Large ribosomal subunit protein uL3 from Methylobacterium sp. (strain 4-46).